The sequence spans 722 residues: Protein Aster-A (722 aa).

A disordered region spans residues 1–62 (MFDTTPHSGR…KSGVSGTLST (62 aa)). Residues 8–18 (SGRSSPSSSPS) are compositionally biased toward low complexity. Residues 93 to 160 (EDFRKLFSKL…KEVTCLKKEK (68 aa)) enclose the GRAM domain. Residues 256–336 (ISPSGAADHS…DGPTSSLGPL (81 aa)) are disordered. Residues Ser265, Ser269, Ser273, and Ser417 each carry the phosphoserine modification. One can recognise a VASt domain in the interval 369-540 (SGRLLINSVF…ELAKAEKLSL (172 aa)). A disordered region spans residues 561 to 600 (LSWRGHRDGPQHPDPDPCTQTSMHTSGSLSSRFSEPSVDQ). Basic and acidic residues predominate over residues 565–575 (GHRDGPQHPDP). Residues 578–594 (CTQTSMHTSGSLSSRFS) are compositionally biased toward polar residues. A helical transmembrane segment spans residues 609-629 (ALVLISIVLIVLIALNALLFY).

In terms of tissue distribution, highly expressed in the brain.

It is found in the endoplasmic reticulum membrane. Its subcellular location is the cell membrane. The protein localises to the cytoplasmic vesicle. The protein resides in the autophagosome. Its function is as follows. Cholesterol transporter that mediates non-vesicular transport of cholesterol from the plasma membrane (PM) to the endoplasmic reticulum (ER). Contains unique domains for binding cholesterol and the PM, thereby serving as a molecular bridge for the transfer of cholesterol from the PM to the ER. Plays a crucial role in cholesterol homeostasis and has the unique ability to localize to the PM based on the level of membrane cholesterol. In lipid-poor conditions localizes to the ER membrane and in response to excess cholesterol in the PM is recruited to the endoplasmic reticulum-plasma membrane contact sites (EPCS) which is mediated by the GRAM domain. At the EPCS, the sterol-binding VASt/ASTER domain binds to the cholesterol in the PM and facilitates its transfer from the PM to ER. May play a role in tumor progression. Plays a role in autophagy regulation and is required for biogenesis of the autophagosome. This function in autophagy requires its cholesterol-transfer activity. The protein is Protein Aster-A of Mus musculus (Mouse).